Consider the following 452-residue polypeptide: Ethanolamine kinase 1 (452 aa).

Residues 26 to 64 form a disordered region; that stretch reads AVQTRIGNSAASRRSPAARPPVPAPPALPRGRPGTEGST. Over residues 43-53 the composition is skewed to pro residues; the sequence is ARPPVPAPPAL.

Belongs to the choline/ethanolamine kinase family. As to expression, expressed in kidney, liver, placenta, heart, leukocyte, ovary and testis.

The protein resides in the cytoplasm. It carries out the reaction ethanolamine + ATP = phosphoethanolamine + ADP + H(+). It functions in the pathway phospholipid metabolism; phosphatidylethanolamine biosynthesis; phosphatidylethanolamine from ethanolamine: step 1/3. In terms of biological role, highly specific for ethanolamine phosphorylation. May be a rate-controlling step in phosphatidylethanolamine biosynthesis. The polypeptide is Ethanolamine kinase 1 (Homo sapiens (Human)).